A 505-amino-acid chain; its full sequence is MKMILFNQNPMITKLLESVSKKLELPIENFNHYQELSARLKENQEWLLIADDECLEKLDQVDWLELKETISQNKNSVCMYKKGNEAQPFLEGFEVKIKKPFLPTEMLKVLQKKLGSNASELEPSQNLDPTQEVLETNWDELENLGDLEALVQEEPNNEEQLLPTLNDQEEKEEVKEEEKEEVKEEEKEEVKEEEKEEVKETPQEEKKPKDDETQEGETLKDKEVSKELEAPQELEIPKEETQEQDPIKEETQENKEEKQEKTQDSPSAQELEAMQELVKEIQENSNGQENKEKTQESAEIPQDKEIQEVVTEKTQAQELEVPKEKTQESAEALQETQAHELEKQEIAETPQDVEIPQSQDKEVQELEIPKEETQENTETPQDVETPQEKETQEDHYESIEDIPEPVMAKAMGEELPFLNEAVAKIPNNENDTETPKESVTETSKNENNTETPQEKEESDKTSSPLELRLNLQDLLKSLNQESLKSLLENKTLSIKITLEDKKPNA.

Disordered regions lie at residues 154-403 and 420-465; these read EPNN…EDIP and EAVA…SSPL. Composition is skewed to basic and acidic residues over residues 172–263, 289–311, 337–346, 359–373, and 386–398; these read EEVK…EKTQ, ENKE…EVVT, QAHELEKQEI, QDKE…KEET, and PQEK…HYES. Positions 440 to 451 are enriched in low complexity; it reads TETSKNENNTET.

In terms of assembly, interacts with CheZ; the interaction is essential for each other polar localization.

Its subcellular location is the cytoplasm. Plays an essential role in chemotaxis. Regulates flagellar rotation through the formation of a complex with chemotaxis protein CheZ. Plays a major role in colonization of the stomach. In Helicobacter pylori (strain ATCC 700392 / 26695) (Campylobacter pylori), this protein is Chemotaxis regulatory protein ChePep.